The primary structure comprises 157 residues: Small ribosomal subunit protein uS7 (157 aa).

It belongs to the universal ribosomal protein uS7 family. In terms of assembly, part of the 30S ribosomal subunit. Contacts proteins S9 and S11.

Functionally, one of the primary rRNA binding proteins, it binds directly to 16S rRNA where it nucleates assembly of the head domain of the 30S subunit. Is located at the subunit interface close to the decoding center, probably blocks exit of the E-site tRNA. This chain is Small ribosomal subunit protein uS7, found in Caldicellulosiruptor bescii (strain ATCC BAA-1888 / DSM 6725 / KCTC 15123 / Z-1320) (Anaerocellum thermophilum).